Here is a 520-residue protein sequence, read N- to C-terminus: 4-hydroxyphenylacetate 3-monooxygenase oxygenase component (520 aa).

It belongs to the FADH(2)-utilizing monooxygenase family. In terms of assembly, 4-HPA 3-monooxygenase consists of a reductase component HpaC and an oxygenase component HpaB.

It carries out the reaction 4-hydroxyphenylacetate + FADH2 + O2 = 3,4-dihydroxyphenylacetate + FAD + H2O + H(+). It functions in the pathway aromatic compound metabolism; 4-hydroxyphenylacetate degradation; pyruvate and succinate semialdehyde from 4-hydroxyphenylacetate: step 1/7. Its function is as follows. Utilizes FADH(2) supplied by HpaC or by another flavin reductase, to catalyze the hydroxylation of 4-hydroxyphenylacetic acid, leading to the production of 3,4-DHPA. Can also oxidize phenol to catechol, and hydroxylate other phenol derivatives. This chain is 4-hydroxyphenylacetate 3-monooxygenase oxygenase component (hpaB), found in Escherichia coli.